Consider the following 226-residue polypeptide: Thiopurine S-methyltransferase (226 aa).

The S-adenosyl-L-methionine site is built by W16, M51, E72, and R131.

It belongs to the class I-like SAM-binding methyltransferase superfamily. TPMT family.

The protein localises to the cytoplasm. It catalyses the reaction S-adenosyl-L-methionine + a thiopurine = S-adenosyl-L-homocysteine + a thiopurine S-methylether.. The protein is Thiopurine S-methyltransferase of Francisella tularensis subsp. novicida (strain U112).